A 660-amino-acid polypeptide reads, in one-letter code: MSKSGKKLTQKLKKNLPVTGPQAPTLYELMQWYCLNTNTHGCRRIVVSKGRLRRWIWISLTLCAVAVIFWQCALLLMSYYSVSASITVTFQKLVYPAVTICNLNPYSYSKVKDRLAALEKETSQTLKNIYGFTEPLIRSKRDVGVNVENSTEDIFLKQIPLYRLESVKGSQLVVSDLKTKKRTRMSAKVIHRDAESVQDPGNMVGFKLCDPKNSSDCTIFTFSSGVNAIQEWYRLHYTNILAKISMEDKIAMGYKADELIVTCFFDGLSCDARNFTLFHHPLYGNCYTFNSAERGNLLVSSMGGAEYGLKVVLYIDEDEYNPYLSTAAGAKILVHDQDEYPFIEYLGTELETATETSIGMQLTESAKLSDPYSDCTMDGRDVSVENLYNKKYTLQICLNSCFQREMVRSCGCAHYDQPLPNGAKYCNYEEYPSWIYCYFKVYKQFVQEELGCQSACRESCSFKEWTLTRSLAKWPSLNSEEWMLRVLSWELGEKLNKNLTKNDLANLNIFYQDLNSRSISESPTYNIVTLLSNFGGQLGLWMSCSMICVLEIIEVFFIDSFWVVLRQRWRNWWENRKENQAEDTPEIPVPTMTGHDNPLCVDNPICLGEEDPPTFNSALQLPQSQDSHVPRTPPPKYNTLRIQSAFQLETIDSDEDVERL.

At 1-55 (MSKSGKKLTQKLKKNLPVTGPQAPTLYELMQWYCLNTNTHGCRRIVVSKGRLRRW) the chain is on the cytoplasmic side. A helical membrane pass occupies residues 56 to 76 (IWISLTLCAVAVIFWQCALLL). At 77 to 537 (MSYYSVSASI…VTLLSNFGGQ (461 aa)) the chain is on the extracellular side. Cystine bridges form between cysteine 101-cysteine 286, cysteine 209-cysteine 217, cysteine 263-cysteine 270, cysteine 375-cysteine 460, cysteine 397-cysteine 456, cysteine 401-cysteine 452, cysteine 410-cysteine 437, and cysteine 412-cysteine 426. A helical membrane pass occupies residues 538–558 (LGLWMSCSMICVLEIIEVFFI). At 559–660 (DSFWVVLRQR…IDSDEDVERL (102 aa)) the chain is on the cytoplasmic side.

It belongs to the amiloride-sensitive sodium channel (TC 1.A.6) family. SCNN1G subfamily. Component of the heterotrimeric epithelial sodium channel (ENaC) composed of an alpha/SCNN1A, a beta/SCNN1B and a gamma/SCNN1G subunit.

The protein localises to the apical cell membrane. It catalyses the reaction Na(+)(in) = Na(+)(out). Originally identified and characterized by its inhibition by the diuretic drug amiloride. Functionally, this is one of the three pore-forming subunits of the heterotrimeric epithelial sodium channel (ENaC), a critical regulator of sodium balance and fluid homeostasis. ENaC operates in epithelial tissues, where it mediates the electrodiffusion of sodium ions from extracellular fluid through the apical membrane of cells, with water following osmotically. This is Epithelial sodium channel subunit gamma (scnn1g-a) from Xenopus laevis (African clawed frog).